The following is a 106-amino-acid chain: Large ribosomal subunit protein eL42 (106 aa).

4 residues coordinate Zn(2+): Cys12, Cys17, Cys74, and Cys77.

The protein belongs to the eukaryotic ribosomal protein eL42 family. In terms of assembly, component of the large ribosomal subunit. Mature ribosomes consist of a small (40S) and a large (60S) subunit. The 40S subunit contains about 32 different proteins and 1 molecule of RNA (18S). The 60S subunit contains 45 different proteins and 3 molecules of RNA (25S, 5.8S and 5S). Zn(2+) serves as cofactor.

The protein resides in the cytoplasm. Component of the ribosome, a large ribonucleoprotein complex responsible for the synthesis of proteins in the cell. The small ribosomal subunit (SSU) binds messenger RNAs (mRNAs) and translates the encoded message by selecting cognate aminoacyl-transfer RNA (tRNA) molecules. The large subunit (LSU) contains the ribosomal catalytic site termed the peptidyl transferase center (PTC), which catalyzes the formation of peptide bonds, thereby polymerizing the amino acids delivered by tRNAs into a polypeptide chain. The nascent polypeptides leave the ribosome through a tunnel in the LSU and interact with protein factors that function in enzymatic processing, targeting, and the membrane insertion of nascent chains at the exit of the ribosomal tunnel. The protein is Large ribosomal subunit protein eL42 (RPL44) of Candida albicans (strain SC5314 / ATCC MYA-2876) (Yeast).